An 89-amino-acid polypeptide reads, in one-letter code: MNHKEKESVFVDLYDLYKEGELEDESMEWMKQHESLFQKNAEDLKSKTCLKRSPGAEEESQIRYMKVYLSSMYICFILLAIWMTVWFYF.

Residues 67–86 (VYLSSMYICFILLAIWMTVW) traverse the membrane as a helical segment.

The protein localises to the membrane. This is an uncharacterized protein from Bacillus subtilis (strain 168).